The following is a 129-amino-acid chain: MLDVDTARRRIVDLTDAVRAFCTAHDDGLCNVFVPHATAGVAIIETGAGSDEDLVDTLVRLLPRDDRYRHAHGSYGHGADHLLPAFVAPSVTVPVSGGQPLLGTWQSIVLVDLNQDNPRRSVRLSFVEG.

This sequence belongs to the UPF0047 family.

The sequence is that of UPF0047 protein Mb2586c from Mycobacterium bovis (strain ATCC BAA-935 / AF2122/97).